A 205-amino-acid chain; its full sequence is Outer-membrane lipoprotein LolB (205 aa).

Positions 1–17 (MFLRHVIVFSFIALLAG) are cleaved as a signal peptide. A lipid anchor (N-palmitoyl cysteine) is attached at cysteine 18. Cysteine 18 is lipidated: S-diacylglycerol cysteine.

Belongs to the LolB family. As to quaternary structure, monomer.

It localises to the cell outer membrane. Plays a critical role in the incorporation of lipoproteins in the outer membrane after they are released by the LolA protein. The protein is Outer-membrane lipoprotein LolB of Pseudomonas fluorescens (strain Pf0-1).